Here is a 497-residue protein sequence, read N- to C-terminus: Serine hydroxymethyltransferase (497 aa).

Residues Leu176 and 180-182 (GHL) contribute to the (6S)-5,6,7,8-tetrahydrofolate site. At Lys289 the chain carries N6-(pyridoxal phosphate)lysine.

Belongs to the SHMT family. Homodimer. Pyridoxal 5'-phosphate serves as cofactor.

It localises to the cytoplasm. It catalyses the reaction (6R)-5,10-methylene-5,6,7,8-tetrahydrofolate + glycine + H2O = (6S)-5,6,7,8-tetrahydrofolate + L-serine. Its pathway is one-carbon metabolism; tetrahydrofolate interconversion. The protein operates within amino-acid biosynthesis; glycine biosynthesis; glycine from L-serine: step 1/1. Its function is as follows. Catalyzes the reversible interconversion of serine and glycine with tetrahydrofolate (THF) serving as the one-carbon carrier. This reaction serves as the major source of one-carbon groups required for the biosynthesis of purines, thymidylate, methionine, and other important biomolecules. Also exhibits THF-independent aldolase activity toward beta-hydroxyamino acids, producing glycine and aldehydes, via a retro-aldol mechanism. This chain is Serine hydroxymethyltransferase, found in Chlamydia caviae (strain ATCC VR-813 / DSM 19441 / 03DC25 / GPIC) (Chlamydophila caviae).